The following is a 605-amino-acid chain: MLLKTSRRTFLKGLTLSGVAGSLGVWSFNARSSLSLPVAASLQGTQFDLTIGETAVNITGSERQAKTINGGLPGPVLRWKEGDTITLKVKNRLNEQTSIHWHGIILPANMDGVPGLSFMGIEPDDTYVYTFKVKQNGTYWYHSHSGLQEQEGVYGAIIIDAREPEPFAYDREHVVMLSDWTDENPHSLLKKLKKQSDYYNFNKPTVGSFFRDVNTRGLSATIADRKMWAEMKMNPTDLADVSGYTYTYLMNGQAPLKNWTGLFRPGEKIRLRFINGSAMTYFDIRIPGLKMTVVAADGQYVNPVTVDEFRIAVAETYDVIVEPQGEAYTIFAQSMDRTGYARGTLATREGLSAAVPPLDPRPLLTMEDMGMGGMGHDMAGMDHSQMGGMDNSGEMMSMDGADLPDSGTSSAPMDHSSMAGMDHSRMAGMPGMQSHPASETDNPLVDMQAMSVSPKLNDPGIGLRNNGRKVLTYADLKSRFEDPDGREPGRTIELHLTGHMEKFAWSFNGIKFSDAAPVLLKYGERLRITLINDTMMTHPIHLHGMWSDLEDENGNFMVRKHTIDVPPGTKRSYRVTADALGRWAYHCHLLYHMEMGMFREVRVEE.

The tat-type signal signal peptide spans 1–41 (MLLKTSRRTFLKGLTLSGVAGSLGVWSFNARSSLSLPVAAS). Positions 100, 102, 142, and 144 each coordinate Cu cation. Repeat copies occupy residues 382 to 389 (DHSQMGGM), 414 to 421 (DHSSMAGM), and 422 to 429 (DHSRMAGM). The segment at 382–429 (DHSQMGGMDNSGEMMSMDGADLPDSGTSSAPMDHSSMAGMDHSRMAGM) is 3 X 8 AA tandem repeats of D-H-X-X-M-X-G-M. Cu cation contacts are provided by histidine 538, histidine 541, histidine 543, histidine 586, cysteine 587, histidine 588, histidine 592, and methionine 597.

The protein belongs to the multicopper oxidase family. CopA subfamily. In terms of processing, predicted to be exported by the Tat system. The position of the signal peptide cleavage has not been experimentally proven.

The protein resides in the periplasm. Functionally, required for the copper-inducible expression of copper resistance. May have oxidase activity. The chain is Copper resistance protein A (pcoA) from Escherichia coli.